A 453-amino-acid polypeptide reads, in one-letter code: MGANKQMNLGFLFQISGVHYGGWRYPSAQPHRATDIQYYAEIVRTAERGKLDFCFLADSIAAYEGSADQQDRSKDALMAAEPKRLLEPFTLLAALAMVTEHIGLVTTATTTYNEPYTMARLFASLDHITNGRAGWNVVTSANLAEAHNFGRDGHVEHGDRYARAEEFINVVFKLWDSIEDGAYLRDKLAGRYGLSEKIHFINHIGEHFKVRGPLNVPRPPQGHPVIVQAGSSHPGKELAARTAEVVFTAQQTLADGKAFYSDVKGRMAKYGRSSENLKVLPGVVVYVAETESEAKAKYETVSNLVPPDFGLFMLSDLLGEIDLKQFDIDGPLPEDLPEAKGSQSRREVIINLARRENLTIRQLYQRVSGASGHRSIWGTPKQIADQFEQWVYEEAADGFNILPPYLPESMNDFVNFVVPELQRRGIFRTEYEGSTLRDHLGLARPKNSVAKPS.

6 residues coordinate FMN: Asp-58, Thr-107, His-157, Tyr-161, Ser-231, and Ser-232.

Belongs to the NtaA/SnaA/DszA monooxygenase family. In terms of assembly, heterodimer of two subunits, A and B.

The enzyme catalyses nitrilotriacetate + FMNH2 + O2 = aminodiacetate + FMN + glyoxylate + H2O. Its function is as follows. Hydroxylation of nitrilotriacetate. The polypeptide is Nitrilotriacetate monooxygenase component A (ntaA) (Aminobacter aminovorans (Chelatobacter heintzii)).